The following is a 394-amino-acid chain: 1-deoxy-D-xylulose 5-phosphate reductoisomerase (394 aa).

Residues T10, G11, S12, I13, N38, and N125 each coordinate NADPH. Position 126 (K126) interacts with 1-deoxy-D-xylulose 5-phosphate. E127 provides a ligand contact to NADPH. Residue D151 participates in Mn(2+) binding. 1-deoxy-D-xylulose 5-phosphate contacts are provided by S152, E153, S182, and H205. E153 lines the Mn(2+) pocket. G211 serves as a coordination point for NADPH. 1-deoxy-D-xylulose 5-phosphate contacts are provided by S218, N223, K224, and E227. Mn(2+) is bound at residue E227.

This sequence belongs to the DXR family. The cofactor is Mg(2+). Mn(2+) is required as a cofactor.

The catalysed reaction is 2-C-methyl-D-erythritol 4-phosphate + NADP(+) = 1-deoxy-D-xylulose 5-phosphate + NADPH + H(+). The protein operates within isoprenoid biosynthesis; isopentenyl diphosphate biosynthesis via DXP pathway; isopentenyl diphosphate from 1-deoxy-D-xylulose 5-phosphate: step 1/6. Functionally, catalyzes the NADPH-dependent rearrangement and reduction of 1-deoxy-D-xylulose-5-phosphate (DXP) to 2-C-methyl-D-erythritol 4-phosphate (MEP). In Methylococcus capsulatus (strain ATCC 33009 / NCIMB 11132 / Bath), this protein is 1-deoxy-D-xylulose 5-phosphate reductoisomerase.